The following is a 336-amino-acid chain: Dihydroorotate dehydrogenase (quinone) (336 aa).

Residues 62–66 (AGLDK) and T86 contribute to the FMN site. K66 is a binding site for substrate. 111–115 (NRMGF) lines the substrate pocket. FMN is bound by residues N139 and N172. Substrate is bound at residue N172. S175 functions as the Nucleophile in the catalytic mechanism. N177 contributes to the substrate binding site. The FMN site is built by K217 and T245. 246–247 (NT) is a binding site for substrate. Residues G268, G297, and 318 to 319 (YS) each bind FMN.

The protein belongs to the dihydroorotate dehydrogenase family. Type 2 subfamily. Monomer. It depends on FMN as a cofactor.

Its subcellular location is the cell membrane. The enzyme catalyses (S)-dihydroorotate + a quinone = orotate + a quinol. It participates in pyrimidine metabolism; UMP biosynthesis via de novo pathway; orotate from (S)-dihydroorotate (quinone route): step 1/1. Its function is as follows. Catalyzes the conversion of dihydroorotate to orotate with quinone as electron acceptor. The sequence is that of Dihydroorotate dehydrogenase (quinone) from Psychromonas ingrahamii (strain DSM 17664 / CCUG 51855 / 37).